Here is a 165-residue protein sequence, read N- to C-terminus: Nucleoside-triphosphatase THEP1 (165 aa).

Residues 7–14 (GRPGVGKT) and 93–100 (LVIIDEVG) each bind ATP.

Belongs to the THEP1 NTPase family.

The catalysed reaction is a ribonucleoside 5'-triphosphate + H2O = a ribonucleoside 5'-diphosphate + phosphate + H(+). Functionally, has nucleotide phosphatase activity towards ATP, GTP, CTP, TTP and UTP. May hydrolyze nucleoside diphosphates with lower efficiency. The polypeptide is Nucleoside-triphosphatase THEP1 (Archaeoglobus fulgidus (strain ATCC 49558 / DSM 4304 / JCM 9628 / NBRC 100126 / VC-16)).